We begin with the raw amino-acid sequence, 432 residues long: Protein trichome birefringence-like 23 (432 aa).

The helical; Signal-anchor for type II membrane protein transmembrane segment at 13–35 threads the bilayer; it reads QNTYLIKLVAATLITCLAFRFFV. Residues 153-155 carry the GDS motif motif; it reads GDS. The short motif at 404–418 is the DCXHWCLPGXXDXWN motif element; the sequence is DCLHWCLPGPIDHLN.

The protein belongs to the PC-esterase family. TBL subfamily.

The protein resides in the membrane. May act as a bridging protein that binds pectin and other cell wall polysaccharides. Probably involved in maintaining esterification of pectins. May be involved in the specific O-acetylation of cell wall polymers. The protein is Protein trichome birefringence-like 23 (TBL23) of Arabidopsis thaliana (Mouse-ear cress).